Reading from the N-terminus, the 548-residue chain is Chaperonin GroEL (548 aa).

ATP contacts are provided by residues 30 to 33, Lys51, 87 to 91, Gly415, 479 to 481, and Asp495; these read TLGP, DGTTT, and NAA.

Belongs to the chaperonin (HSP60) family. In terms of assembly, forms a cylinder of 14 subunits composed of two heptameric rings stacked back-to-back. Interacts with the co-chaperonin GroES.

The protein resides in the cytoplasm. It carries out the reaction ATP + H2O + a folded polypeptide = ADP + phosphate + an unfolded polypeptide.. Together with its co-chaperonin GroES, plays an essential role in assisting protein folding. The GroEL-GroES system forms a nano-cage that allows encapsulation of the non-native substrate proteins and provides a physical environment optimized to promote and accelerate protein folding. The sequence is that of Chaperonin GroEL from Oleidesulfovibrio alaskensis (strain ATCC BAA-1058 / DSM 17464 / G20) (Desulfovibrio alaskensis).